A 751-amino-acid polypeptide reads, in one-letter code: FAD-dependent monooxygenase atnA (751 aa).

A helical membrane pass occupies residues 8-28 (LIVGGGVAGLSLAIMLEAYGF). FAD-binding residues include E34, G48, and R109. Y218 is an active-site residue. FAD-binding residues include D311 and A324. The next 8 membrane-spanning stretches (helical) occupy residues 446–466 (PLAT…PWSV), 481–501 (SEVF…LWVI), 508–528 (LLIS…YWGW), 563–583 (ALLP…ALAS), 590–610 (DWWP…STFL), 639–659 (IAVV…AALL), 663–683 (IISL…ALIV), and 706–726 (AWAV…LAGA).

Belongs to the paxM FAD-dependent monooxygenase family. FAD is required as a cofactor.

It localises to the membrane. It participates in secondary metabolite biosynthesis; terpenoid biosynthesis. Its function is as follows. FAD-dependent monooxygenase; part of the gene cluster that mediates the biosynthesis of the meroterpenoids arthripenoids. The pathway begins with the HR-PKS atnH that catalyzes two chain-extension steps to form a reduced triketide, which then primes the SAT domain in the NR-PKS atnG to initiate three more cycles of extension to give a linear hexaketide corresponding to the polyketide part of arthripenoids. The FAD-dependent monooxygenase atnJ then performs an oxidative decarboxylation at C11 of the atnH/atnG product, via an electrophilic aromatic hydroxylation with concomitant ipso-decarboxylation. The membrane-bound polyprenyl transferase atnF then introduces a farnesyl group before the FAD-dependent monooxygenase atnK functions as the first epoxidase on terminal C12'-C13' olefin, followed by a second epoxidation on C7'-C8' catalyzed by atnA. The terpene cyclase/mutase atnI then initiates the sequential tricyclic ring formation through protonation of the terminal epoxide and catalyzes the regioselective and stereoselective 6/6/6-tricyclic ring formation. The cytochrome P450 monooxygenase atnM is responsible for hydroxylating both C1' and C10'. The next steps may involve ketoreduction and acetyl transfer by the ketoreductase atnB and the acetyltransferase atnC, and lead to the production of arthripenoid B, the final biosynthetic product of the atn cluster. The hydroquinone moiety in arthripenoid B is prone to undergo spontaneous oxidation to afford a benzoquinone compound, a key intermediate for generating structure diversity. For instance, addition of a cysteine followed by ring contraction gives arthripenoid A, tautomerization gives the main product arthripenoid C, addition of a molecular of water or amine affords arthripenoid D or E, respectively, and loss of one water forms arthripenoid F. In Arthrinium sp, this protein is FAD-dependent monooxygenase atnA.